Consider the following 308-residue polypeptide: Pseudouridine-5'-phosphate glycosidase (308 aa).

E25 (proton donor) is an active-site residue. Substrate contacts are provided by K86 and V106. Residue D142 participates in Mn(2+) binding. S144–D146 contacts substrate. Catalysis depends on K163, which acts as the Nucleophile.

Belongs to the pseudouridine-5'-phosphate glycosidase family. In terms of assembly, homotrimer. Mn(2+) serves as cofactor.

It catalyses the reaction D-ribose 5-phosphate + uracil = psi-UMP + H2O. In terms of biological role, catalyzes the reversible cleavage of pseudouridine 5'-phosphate (PsiMP) to ribose 5-phosphate and uracil. Functions biologically in the cleavage direction, as part of a pseudouridine degradation pathway. The sequence is that of Pseudouridine-5'-phosphate glycosidase from Symbiobacterium thermophilum (strain DSM 24528 / JCM 14929 / IAM 14863 / T).